The chain runs to 334 residues: Holliday junction branch migration complex subunit RuvB (334 aa).

Residues 4 to 184 (ADRLISAEPI…FGIVQRLEFY (181 aa)) are large ATPase domain (RuvB-L). Residues I23, R24, G65, K68, T69, T70, 131–133 (EDY), R174, Y184, and R221 contribute to the ATP site. T69 contacts Mg(2+). The small ATPAse domain (RuvB-S) stretch occupies residues 185-255 (QVADLQHIVS…VAMQALDMLN (71 aa)). The segment at 258–334 (AEGFDYMDRK…YKHFGMVREE (77 aa)) is head domain (RuvB-H). DNA-binding residues include R294, R313, and R318.

Belongs to the RuvB family. In terms of assembly, homohexamer. Forms an RuvA(8)-RuvB(12)-Holliday junction (HJ) complex. HJ DNA is sandwiched between 2 RuvA tetramers; dsDNA enters through RuvA and exits via RuvB. An RuvB hexamer assembles on each DNA strand where it exits the tetramer. Each RuvB hexamer is contacted by two RuvA subunits (via domain III) on 2 adjacent RuvB subunits; this complex drives branch migration. In the full resolvosome a probable DNA-RuvA(4)-RuvB(12)-RuvC(2) complex forms which resolves the HJ.

The protein resides in the cytoplasm. The catalysed reaction is ATP + H2O = ADP + phosphate + H(+). Functionally, the RuvA-RuvB-RuvC complex processes Holliday junction (HJ) DNA during genetic recombination and DNA repair, while the RuvA-RuvB complex plays an important role in the rescue of blocked DNA replication forks via replication fork reversal (RFR). RuvA specifically binds to HJ cruciform DNA, conferring on it an open structure. The RuvB hexamer acts as an ATP-dependent pump, pulling dsDNA into and through the RuvAB complex. RuvB forms 2 homohexamers on either side of HJ DNA bound by 1 or 2 RuvA tetramers; 4 subunits per hexamer contact DNA at a time. Coordinated motions by a converter formed by DNA-disengaged RuvB subunits stimulates ATP hydrolysis and nucleotide exchange. Immobilization of the converter enables RuvB to convert the ATP-contained energy into a lever motion, pulling 2 nucleotides of DNA out of the RuvA tetramer per ATP hydrolyzed, thus driving DNA branch migration. The RuvB motors rotate together with the DNA substrate, which together with the progressing nucleotide cycle form the mechanistic basis for DNA recombination by continuous HJ branch migration. Branch migration allows RuvC to scan DNA until it finds its consensus sequence, where it cleaves and resolves cruciform DNA. This Serratia proteamaculans (strain 568) protein is Holliday junction branch migration complex subunit RuvB.